We begin with the raw amino-acid sequence, 474 residues long: MEYLPIFIDLKNRPVLVVGGGAVAARKIHMLQRATITIVAPALCTELKKVLIKQNISWISKNFQPIMLNKVILVIVATNDSKLNTFIYQNAEKHNILINTVDDKNKCSFIFPAIIDRNPVLIGISSCGKAPILVRILREKLELLLPKSLGFVAKLAGAWRNKVKQHIVDTVLRRQFWEKIFYNGHVVTLMEKGRPKEANKVLNYALNNSVKNKNNKTGHVTLVGAGPGDIGLLTIRGLQVIQQADIILYDYLVNSDILDLARRDADKICVGKHVGNHSISQKKLNQFIVQLAQKGNKVVRLKGGDPFIFGRGGEELQAISEAGIAFQVVPGITAGIGVAAYSGIPLTHRKYAHSVVFITGHNTNGDNQFNWNSLSNNQQTLVIYMGKINAISIRNNLIIHGRNMHTPVAVISRGTYQDQKILIGTLIELEKLTQMADHPALLVIGDVVSLHSKINWFGQKALHYYLINSIINLI.

The interval 1–202 is precorrin-2 dehydrogenase /sirohydrochlorin ferrochelatase; the sequence is MEYLPIFIDL…GRPKEANKVL (202 aa). Residues 22–23 and 41–42 each bind NAD(+); these read AV and PA. The residue at position 126 (Ser-126) is a Phosphoserine. The interval 218 to 474 is uroporphyrinogen-III C-methyltransferase; sequence GHVTLVGAGP…YLINSIINLI (257 aa). Pro-227 serves as a coordination point for S-adenosyl-L-methionine. Asp-250 serves as the catalytic Proton acceptor. The active-site Proton donor is Lys-272. Residues 303-305, Ile-308, 333-334, Met-385, and Gly-414 contribute to the S-adenosyl-L-methionine site; these read GGD and TA.

In the N-terminal section; belongs to the precorrin-2 dehydrogenase / sirohydrochlorin ferrochelatase family. It in the C-terminal section; belongs to the precorrin methyltransferase family.

It carries out the reaction uroporphyrinogen III + 2 S-adenosyl-L-methionine = precorrin-2 + 2 S-adenosyl-L-homocysteine + H(+). The enzyme catalyses precorrin-2 + NAD(+) = sirohydrochlorin + NADH + 2 H(+). The catalysed reaction is siroheme + 2 H(+) = sirohydrochlorin + Fe(2+). It functions in the pathway cofactor biosynthesis; adenosylcobalamin biosynthesis; precorrin-2 from uroporphyrinogen III: step 1/1. Its pathway is cofactor biosynthesis; adenosylcobalamin biosynthesis; sirohydrochlorin from precorrin-2: step 1/1. The protein operates within porphyrin-containing compound metabolism; siroheme biosynthesis; precorrin-2 from uroporphyrinogen III: step 1/1. It participates in porphyrin-containing compound metabolism; siroheme biosynthesis; siroheme from sirohydrochlorin: step 1/1. It functions in the pathway porphyrin-containing compound metabolism; siroheme biosynthesis; sirohydrochlorin from precorrin-2: step 1/1. Its function is as follows. Multifunctional enzyme that catalyzes the SAM-dependent methylations of uroporphyrinogen III at position C-2 and C-7 to form precorrin-2 via precorrin-1. Then it catalyzes the NAD-dependent ring dehydrogenation of precorrin-2 to yield sirohydrochlorin. Finally, it catalyzes the ferrochelation of sirohydrochlorin to yield siroheme. The sequence is that of Siroheme synthase from Blochmanniella pennsylvanica (strain BPEN).